A 612-amino-acid polypeptide reads, in one-letter code: Elongation factor 4 (612 aa).

The tr-type G domain maps to 11–193 (KHIRNFSIVA…EIVKKVPAPN (183 aa)). GTP is bound by residues 23–28 (DHGKST) and 140–143 (NKID).

It belongs to the TRAFAC class translation factor GTPase superfamily. Classic translation factor GTPase family. LepA subfamily.

The protein localises to the cell membrane. It carries out the reaction GTP + H2O = GDP + phosphate + H(+). Required for accurate and efficient protein synthesis under certain stress conditions. May act as a fidelity factor of the translation reaction, by catalyzing a one-codon backward translocation of tRNAs on improperly translocated ribosomes. Back-translocation proceeds from a post-translocation (POST) complex to a pre-translocation (PRE) complex, thus giving elongation factor G a second chance to translocate the tRNAs correctly. Binds to ribosomes in a GTP-dependent manner. This is Elongation factor 4 from Lactobacillus gasseri (strain ATCC 33323 / DSM 20243 / BCRC 14619 / CIP 102991 / JCM 1131 / KCTC 3163 / NCIMB 11718 / NCTC 13722 / AM63).